Consider the following 433-residue polypeptide: Serine hydroxymethyltransferase (433 aa).

Residues L132 and 136–138 (GHL) contribute to the (6S)-5,6,7,8-tetrahydrofolate site. K241 is subject to N6-(pyridoxal phosphate)lysine.

Belongs to the SHMT family. As to quaternary structure, homodimer. Requires pyridoxal 5'-phosphate as cofactor.

Its subcellular location is the cytoplasm. It catalyses the reaction (6R)-5,10-methylene-5,6,7,8-tetrahydrofolate + glycine + H2O = (6S)-5,6,7,8-tetrahydrofolate + L-serine. The protein operates within one-carbon metabolism; tetrahydrofolate interconversion. Its pathway is amino-acid biosynthesis; glycine biosynthesis; glycine from L-serine: step 1/1. Catalyzes the reversible interconversion of serine and glycine with tetrahydrofolate (THF) serving as the one-carbon carrier. This reaction serves as the major source of one-carbon groups required for the biosynthesis of purines, thymidylate, methionine, and other important biomolecules. Also exhibits THF-independent aldolase activity toward beta-hydroxyamino acids, producing glycine and aldehydes, via a retro-aldol mechanism. The chain is Serine hydroxymethyltransferase from Bradyrhizobium sp. (strain ORS 278).